Consider the following 216-residue polypeptide: 3-isopropylmalate dehydratase small subunit (216 aa).

It belongs to the LeuD family. LeuD type 1 subfamily. In terms of assembly, heterodimer of LeuC and LeuD.

It catalyses the reaction (2R,3S)-3-isopropylmalate = (2S)-2-isopropylmalate. Its pathway is amino-acid biosynthesis; L-leucine biosynthesis; L-leucine from 3-methyl-2-oxobutanoate: step 2/4. Catalyzes the isomerization between 2-isopropylmalate and 3-isopropylmalate, via the formation of 2-isopropylmaleate. This is 3-isopropylmalate dehydratase small subunit from Acidovorax ebreus (strain TPSY) (Diaphorobacter sp. (strain TPSY)).